Here is a 515-residue protein sequence, read N- to C-terminus: Tyrosine decarboxylase 1 (515 aa).

2 tandem repeats follow at residues 81 to 138 (DDIT…TELE) and 141 to 192 (VTDW…GKDQ). The 2 X approximate tandem repeats stretch occupies residues 81–192 (DDITNHIVPG…KVLNKIGKDQ (112 aa)). Residue alanine 105 coordinates substrate. Pyridoxal 5'-phosphate-binding residues include threonine 169 and cysteine 170. Histidine 205 lines the substrate pocket. 2 residues coordinate pyridoxal 5'-phosphate: threonine 264 and asparagine 318. Lysine 321 carries the N6-(pyridoxal phosphate)lysine modification.

The protein belongs to the group II decarboxylase family. It depends on pyridoxal 5'-phosphate as a cofactor. In terms of tissue distribution, mostly expressed in bulbs, and, to a lower extent, in stems, roots, leaves and flowers.

It carries out the reaction L-tyrosine + H(+) = tyramine + CO2. Its pathway is alkaloid biosynthesis. Functionally, catalyzes the decarboxylation of L-tyrosine to tyramine, which is converted to norbelladine, a precursor to all Amaryllidaceae alkaloids such as galanthamine, lycorine and haemanthamine, and including haemanthamine- and crinamine-type alkaloids, promising anticancer agents. The polypeptide is Tyrosine decarboxylase 1 (Narcissus pseudonarcissus (Daffodil)).